Reading from the N-terminus, the 215-residue chain is Phosphatidylserine decarboxylase proenzyme (215 aa).

The Schiff-base intermediate with substrate; via pyruvic acid role is filled by S181. S181 is modified (pyruvic acid (Ser); by autocatalysis).

The protein belongs to the phosphatidylserine decarboxylase family. PSD-A subfamily. Heterodimer of a large membrane-associated beta subunit and a small pyruvoyl-containing alpha subunit. The cofactor is pyruvate. In terms of processing, is synthesized initially as an inactive proenzyme. Formation of the active enzyme involves a self-maturation process in which the active site pyruvoyl group is generated from an internal serine residue via an autocatalytic post-translational modification. Two non-identical subunits are generated from the proenzyme in this reaction, and the pyruvate is formed at the N-terminus of the alpha chain, which is derived from the carboxyl end of the proenzyme. The post-translation cleavage follows an unusual pathway, termed non-hydrolytic serinolysis, in which the side chain hydroxyl group of the serine supplies its oxygen atom to form the C-terminus of the beta chain, while the remainder of the serine residue undergoes an oxidative deamination to produce ammonia and the pyruvoyl prosthetic group on the alpha chain.

Its subcellular location is the cell membrane. It carries out the reaction a 1,2-diacyl-sn-glycero-3-phospho-L-serine + H(+) = a 1,2-diacyl-sn-glycero-3-phosphoethanolamine + CO2. The protein operates within phospholipid metabolism; phosphatidylethanolamine biosynthesis; phosphatidylethanolamine from CDP-diacylglycerol: step 2/2. Its function is as follows. Catalyzes the formation of phosphatidylethanolamine (PtdEtn) from phosphatidylserine (PtdSer). This chain is Phosphatidylserine decarboxylase proenzyme, found in Polynucleobacter asymbioticus (strain DSM 18221 / CIP 109841 / QLW-P1DMWA-1) (Polynucleobacter necessarius subsp. asymbioticus).